A 309-amino-acid chain; its full sequence is Type II methyltransferase M.HindIII (309 aa).

It belongs to the N(4)/N(6)-methyltransferase family.

The catalysed reaction is a 2'-deoxyadenosine in DNA + S-adenosyl-L-methionine = an N(6)-methyl-2'-deoxyadenosine in DNA + S-adenosyl-L-homocysteine + H(+). Its function is as follows. A beta subtype methylase that recognizes the double-stranded sequence 5'-AAGCTT-3', methylates A-1 on both strands, and protects the DNA from cleavage by the HindIII endonuclease. This Haemophilus influenzae (strain ATCC 51907 / DSM 11121 / KW20 / Rd) protein is Type II methyltransferase M.HindIII.